The sequence spans 919 residues: Sarcosine dehydrogenase, mitochondrial (919 aa).

The N-terminal 22 residues, 1–22 (MASLSRVLRVAATCPRGRAAWN), are a transit peptide targeting the mitochondrion. An N6-succinyllysine modification is found at Lys-38. His-109 bears the Tele-8alpha-FAD histidine mark. Lys-174 carries the post-translational modification N6-acetyllysine; alternate. Lys-174 is modified (N6-succinyllysine; alternate). Residues Lys-278, Lys-378, Lys-392, and Lys-535 each carry the N6-succinyllysine modification. Residues Lys-560 and Lys-776 each carry the N6-acetyllysine modification. A Phosphotyrosine modification is found at Tyr-778. N6-acetyllysine; alternate is present on residues Lys-803, Lys-885, and Lys-905. N6-succinyllysine; alternate is present on residues Lys-803, Lys-885, and Lys-905.

This sequence belongs to the GcvT family. Requires FAD as cofactor.

The protein resides in the mitochondrion matrix. It catalyses the reaction (6S)-5,6,7,8-tetrahydrofolyl-(gamma-L-Glu)(n) + sarcosine + oxidized [electron-transfer flavoprotein] + H(+) = (6R)-5,10-methylenetetrahydrofolyl-(gamma-L-Glu)(n) + reduced [electron-transfer flavoprotein] + glycine. It functions in the pathway amine and polyamine degradation; sarcosine degradation; formaldehyde and glycine from sarcosine: step 1/1. Functionally, catalyzes the last step of the oxidative degradation of choline to glycine. Converts sarcosine into glycine. The protein is Sarcosine dehydrogenase, mitochondrial of Mus musculus (Mouse).